The primary structure comprises 333 residues: Ornithine carbamoyltransferase (333 aa).

Residues 56 to 59 (STRT), arginine 107, and 134 to 137 (HPTQ) contribute to the carbamoyl phosphate site. Residues asparagine 167, aspartate 231, and 235-236 (SM) contribute to the L-ornithine site. Carbamoyl phosphate contacts are provided by residues 273-274 (CL) and arginine 318.

This sequence belongs to the aspartate/ornithine carbamoyltransferase superfamily. OTCase family.

Its subcellular location is the cytoplasm. It carries out the reaction carbamoyl phosphate + L-ornithine = L-citrulline + phosphate + H(+). Its pathway is amino-acid degradation; L-arginine degradation via ADI pathway; carbamoyl phosphate from L-arginine: step 2/2. Its function is as follows. Reversibly catalyzes the transfer of the carbamoyl group from carbamoyl phosphate (CP) to the N(epsilon) atom of ornithine (ORN) to produce L-citrulline. The protein is Ornithine carbamoyltransferase of Clostridium botulinum (strain Langeland / NCTC 10281 / Type F).